The chain runs to 218 residues: Cytidylate kinase (218 aa).

11-19 (GPGASGKGT) lines the ATP pocket.

This sequence belongs to the cytidylate kinase family. Type 1 subfamily.

It is found in the cytoplasm. The catalysed reaction is CMP + ATP = CDP + ADP. It carries out the reaction dCMP + ATP = dCDP + ADP. The polypeptide is Cytidylate kinase (Neisseria gonorrhoeae (strain ATCC 700825 / FA 1090)).